A 300-amino-acid polypeptide reads, in one-letter code: MDTTLSHTPGSRLSQYLALTKPRVTQLAVFCAVIGMFLATPGMVPWKVLLGGTVGIGLLAGSAFAINCLVEQKIDAMMRRTAWRPSARGEITTLQILAFSTVLGGLGAWTLYTFTNPLTMWLTIATFVGYAVIYTLLLKPMTPQNIVIGGASGAMPPALGWAAVTGAVPGDAWILVLIIFVWTPPHFWVLALYRRKDYENAGLPMLPVTHGEQFTRLHILLYTVILFAVTMMPFISGMSGAVYLTSAVLLGAIFLAYAWKIYRDYSDALARRAFRYSIVYLSLLFAALLVDHYARPVIGM.

The next 9 membrane-spanning stretches (helical) occupy residues 24–44 (VTQL…PGMV), 48–68 (VLLG…AINC), 94–114 (LQIL…LYTF), 118–138 (LTMW…TLLL), 146–166 (IVIG…AVTG), 172–192 (AWIL…VLAL), 217–237 (LHIL…FISG), 239–259 (SGAV…AYAW), and 278–298 (IVYL…RPVI).

This sequence belongs to the UbiA prenyltransferase family. Protoheme IX farnesyltransferase subfamily.

The protein resides in the cell inner membrane. The catalysed reaction is heme b + (2E,6E)-farnesyl diphosphate + H2O = Fe(II)-heme o + diphosphate. Its pathway is porphyrin-containing compound metabolism; heme O biosynthesis; heme O from protoheme: step 1/1. Converts heme B (protoheme IX) to heme O by substitution of the vinyl group on carbon 2 of heme B porphyrin ring with a hydroxyethyl farnesyl side group. This Burkholderia thailandensis (strain ATCC 700388 / DSM 13276 / CCUG 48851 / CIP 106301 / E264) protein is Protoheme IX farnesyltransferase.